A 353-amino-acid chain; its full sequence is uncharacterized protein (353 aa).

This is an uncharacterized protein from Archaeoglobus fulgidus (strain ATCC 49558 / DSM 4304 / JCM 9628 / NBRC 100126 / VC-16).